The primary structure comprises 152 residues: Transcriptional regulator MraZ (152 aa).

SpoVT-AbrB domains lie at A5–E52 and A81–T124.

The protein belongs to the MraZ family. In terms of assembly, forms oligomers.

The protein resides in the cytoplasm. It is found in the nucleoid. In terms of biological role, negatively regulates its own expression and that of the subsequent genes in the proximal part of the division and cell wall (dcw) gene cluster. Acts by binding directly to DNA. May also regulate the expression of genes outside the dcw cluster. The chain is Transcriptional regulator MraZ from Enterobacter sp. (strain 638).